Reading from the N-terminus, the 197-residue chain is Imidazoleglycerol-phosphate dehydratase (197 aa).

Belongs to the imidazoleglycerol-phosphate dehydratase family.

The protein resides in the cytoplasm. The enzyme catalyses D-erythro-1-(imidazol-4-yl)glycerol 3-phosphate = 3-(imidazol-4-yl)-2-oxopropyl phosphate + H2O. Its pathway is amino-acid biosynthesis; L-histidine biosynthesis; L-histidine from 5-phospho-alpha-D-ribose 1-diphosphate: step 6/9. The protein is Imidazoleglycerol-phosphate dehydratase of Bradyrhizobium sp. (strain BTAi1 / ATCC BAA-1182).